We begin with the raw amino-acid sequence, 340 residues long: Selenide, water dikinase (340 aa).

The active site involves U17. U17 is a non-standard amino acid (selenocysteine). ATP-binding positions include K20 and 45 to 47 (NNE). D48 lines the Mg(2+) pocket. ATP contacts are provided by residues D65, D88, and 136–138 (GHT). Position 88 (D88) interacts with Mg(2+). D224 lines the Mg(2+) pocket.

The protein belongs to the selenophosphate synthase 1 family. Class I subfamily. Homodimer. It depends on Mg(2+) as a cofactor.

The catalysed reaction is hydrogenselenide + ATP + H2O = selenophosphate + AMP + phosphate + 2 H(+). Its function is as follows. Synthesizes selenophosphate from selenide and ATP. The protein is Selenide, water dikinase of Campylobacter jejuni subsp. jejuni serotype O:2 (strain ATCC 700819 / NCTC 11168).